Reading from the N-terminus, the 258-residue chain is Thiazole synthase (258 aa).

The active-site Schiff-base intermediate with DXP is the Lys-98. 1-deoxy-D-xylulose 5-phosphate is bound by residues Gly-159, 185 to 186 (AG), and 207 to 208 (NT).

Belongs to the ThiG family. In terms of assembly, homotetramer. Forms heterodimers with either ThiH or ThiS.

The protein localises to the cytoplasm. It carries out the reaction [ThiS sulfur-carrier protein]-C-terminal-Gly-aminoethanethioate + 2-iminoacetate + 1-deoxy-D-xylulose 5-phosphate = [ThiS sulfur-carrier protein]-C-terminal Gly-Gly + 2-[(2R,5Z)-2-carboxy-4-methylthiazol-5(2H)-ylidene]ethyl phosphate + 2 H2O + H(+). Its pathway is cofactor biosynthesis; thiamine diphosphate biosynthesis. Catalyzes the rearrangement of 1-deoxy-D-xylulose 5-phosphate (DXP) to produce the thiazole phosphate moiety of thiamine. Sulfur is provided by the thiocarboxylate moiety of the carrier protein ThiS. In vitro, sulfur can be provided by H(2)S. This chain is Thiazole synthase, found in Bacillus thuringiensis subsp. konkukian (strain 97-27).